A 190-amino-acid chain; its full sequence is Protein GrpE (190 aa).

A compositionally biased stretch (polar residues) spans 1–31; sequence MTETPNTSSEEIQTSEPSSDNELQTLQQENA. The segment at 1–34 is disordered; the sequence is MTETPNTSSEEIQTSEPSSDNELQTLQQENANLK.

Belongs to the GrpE family. As to quaternary structure, homodimer.

It localises to the cytoplasm. In terms of biological role, participates actively in the response to hyperosmotic and heat shock by preventing the aggregation of stress-denatured proteins, in association with DnaK and GrpE. It is the nucleotide exchange factor for DnaK and may function as a thermosensor. Unfolded proteins bind initially to DnaJ; upon interaction with the DnaJ-bound protein, DnaK hydrolyzes its bound ATP, resulting in the formation of a stable complex. GrpE releases ADP from DnaK; ATP binding to DnaK triggers the release of the substrate protein, thus completing the reaction cycle. Several rounds of ATP-dependent interactions between DnaJ, DnaK and GrpE are required for fully efficient folding. This is Protein GrpE from Chlamydia muridarum (strain MoPn / Nigg).